The chain runs to 192 residues: Thymidine kinase (192 aa).

ATP is bound by residues A9–S16 and D87–Q90. The active-site Proton acceptor is E88. Zn(2+) is bound by residues C145, C147, C182, and H185.

It belongs to the thymidine kinase family. As to quaternary structure, homotetramer.

Its subcellular location is the cytoplasm. It catalyses the reaction thymidine + ATP = dTMP + ADP + H(+). The polypeptide is Thymidine kinase (Novosphingobium aromaticivorans (strain ATCC 700278 / DSM 12444 / CCUG 56034 / CIP 105152 / NBRC 16084 / F199)).